The sequence spans 228 residues: MTVETQLNPTPPVNQQIYRILRRDIVHCLIAPGTPLSEKEVSVRFNVSRQPVREAFIKLAENGLIQIRPQRGSYVNKISMAQVRNGSFIRQAIECAVARRAASMITESQCYQLEQNLHQQRIAIERKQLDDFFELDDNFHQLLTQIADCQLAWDTIENLKATVDRVRYMSFDHVSPPEMLLRQHLDIFSALQKRDGDAVERAMTQHLQEISESVRQIRQENSDWFSEE.

The 68-residue stretch at 11–78 folds into the HTH gntR-type domain; it reads PPVNQQIYRI…PQRGSYVNKI (68 aa). Positions 38-57 form a DNA-binding region, H-T-H motif; sequence EKEVSVRFNVSRQPVREAFI.

This is an uncharacterized protein from Escherichia coli O6:H1 (strain CFT073 / ATCC 700928 / UPEC).